A 428-amino-acid polypeptide reads, in one-letter code: Putative ankyrin repeat protein FPV234 (428 aa).

ANK repeat units lie at residues 6 to 35 (KDDILICEAIENYDSESLRNILENGADPNV), 39 to 68 (YQYSHLHNAIEKKNGSAVSLLLKHGADPNI), 71 to 100 (FFTPPLHKAIKKGCVDIARSLLEYGAIVNL), 103 to 132 (YCLKPIHIAANRTESKIVKLLIEYGADINS), 137 to 169 (NGKYPIHYAMKVYDPFRLKIIKVLLDHGADINK), 174 to 202 (TNTSPLYETRFITDDLLDYIISRGANINI), 206 to 238 (MGRNILHEIILRNGYNDFSNILVLIDHGADINA), and 242 to 271 (EGNTPFMLHTINNNAIILANYIVSLYYLSY).

The chain is Putative ankyrin repeat protein FPV234 from Fowlpox virus (strain NVSL) (FPV).